A 374-amino-acid polypeptide reads, in one-letter code: Protein RecA (374 aa).

Residue 66–73 (GPESSGKT) participates in ATP binding. The segment at 327–374 (LGVGVHPEESATEPGADAASAAPADAAPAVPAPTTAKATKSKAAAAKS) is disordered. The span at 338-374 (TEPGADAASAAPADAAPAVPAPTTAKATKSKAAAAKS) shows a compositional bias: low complexity.

It belongs to the RecA family.

Its subcellular location is the cytoplasm. Its function is as follows. Can catalyze the hydrolysis of ATP in the presence of single-stranded DNA, the ATP-dependent uptake of single-stranded DNA by duplex DNA, and the ATP-dependent hybridization of homologous single-stranded DNAs. It interacts with LexA causing its activation and leading to its autocatalytic cleavage. The sequence is that of Protein RecA from Streptomyces lividans.